We begin with the raw amino-acid sequence, 325 residues long: MLLDRIGFYFPKALSNFLILYTCCICFSRIDILPRIVNVVLLITLSSFALYTYWKIIRVGAGSPLEYSFLKIQSIDNVLNRTEQPPDIIKDNCIFVKRDGSFRFCQTCEIWKPDRCHHCSKCNKCFLKMDHHCPWFASCVGFRNQKFFVQFLAYTTVYSLYVLLMTSAQLYSWFRQMKYKSELLDLHLLVVWVLSVIAAIATFAFTTYTIWLVTKNETTIEQYEWGNIRHDLEIYGDSINCNMGSVDNVFDLGSRSANFNCVMGASWAELLLPIQVRADDPFDPYANQGLFFPVQSDTYRIYRESVNLQQRLITRLTLRPSIEHI.

Residues 1 to 5 are Cytoplasmic-facing; that stretch reads MLLDR. Residues 6-26 form a helical membrane-spanning segment; that stretch reads IGFYFPKALSNFLILYTCCIC. Residues 27–35 are Lumenal-facing; that stretch reads FSRIDILPR. Residues 36-56 form a helical membrane-spanning segment; that stretch reads IVNVVLLITLSSFALYTYWKI. The Cytoplasmic segment spans residues 57–146; the sequence is IRVGAGSPLE…ASCVGFRNQK (90 aa). The region spanning 103-153 is the DHHC domain; that stretch reads RFCQTCEIWKPDRCHHCSKCNKCFLKMDHHCPWFASCVGFRNQKFFVQFLA. Residues 147 to 167 form a helical membrane-spanning segment; that stretch reads FFVQFLAYTTVYSLYVLLMTS. Residues 168–185 are Lumenal-facing; the sequence is AQLYSWFRQMKYKSELLD. The chain crosses the membrane as a helical span at residues 186 to 206; that stretch reads LHLLVVWVLSVIAAIATFAFT. Over 207 to 325 the chain is Cytoplasmic; sequence TYTIWLVTKN…LTLRPSIEHI (119 aa).

Belongs to the DHHC palmitoyltransferase family. PFA3 subfamily. Post-translationally, autopalmitoylated.

The protein localises to the vacuole membrane. The enzyme catalyses L-cysteinyl-[protein] + hexadecanoyl-CoA = S-hexadecanoyl-L-cysteinyl-[protein] + CoA. Palmitoyltransferase specific for VAC8. Palmitoylates VAC8 at one or more of its N-terminal cysteine residues, which is required for its proper membrane localization. In Kluyveromyces lactis (strain ATCC 8585 / CBS 2359 / DSM 70799 / NBRC 1267 / NRRL Y-1140 / WM37) (Yeast), this protein is Palmitoyltransferase PFA3 (PFA3).